The primary structure comprises 486 residues: CDT1-like protein b (486 aa).

Disordered stretches follow at residues 273–294 (PEGG…PSRS) and 348–371 (VKDD…ASDD). Residues 281–294 (LRSTNSLARGPSRS) are compositionally biased toward polar residues. Basic and acidic residues predominate over residues 348–363 (VKDDISNESGDEKSNY).

Belongs to the Cdt1 family. In terms of tissue distribution, expressed in proliferating (e.g. shoot and root apical meristems, organ primordia, guard cells and stomatal lineage) and endoreplicating cells (e.g. developing trichomes).

The protein resides in the nucleus. Member of the pre-replication complex. Regulates endoreduplication. Involved in the coordination of cell and plastid division. The protein is CDT1-like protein b (CDT1B) of Arabidopsis thaliana (Mouse-ear cress).